The following is a 619-amino-acid chain: ATP-dependent RNA helicase dbp9 (619 aa).

Residues Met1–Glu30 form a disordered region. Positions Ala16–Asp25 are enriched in basic and acidic residues. The Q motif signature appears at Thr27 to Ser55. Residues Ile58–Leu236 enclose the Helicase ATP-binding domain. Residue Ala71–Thr78 coordinates ATP. Positions Asp184–Asp187 match the DEAD box motif. A Helicase C-terminal domain is found at Gly247–Lys484. 2 disordered regions span residues Ser339–Lys390 and Gly582–Lys619. Basic and acidic residues predominate over residues Lys345–Ser362. Basic residues predominate over residues Arg587–Gly604.

This sequence belongs to the DEAD box helicase family. DDX56/DBP9 subfamily.

The protein resides in the nucleus. Its subcellular location is the nucleolus. It catalyses the reaction ATP + H2O = ADP + phosphate + H(+). Functionally, ATP-binding RNA helicase involved in the biogenesis of 60S ribosomal subunits and is required for the normal formation of 25S and 5.8S rRNAs. The protein is ATP-dependent RNA helicase dbp9 (dbp9) of Neosartorya fischeri (strain ATCC 1020 / DSM 3700 / CBS 544.65 / FGSC A1164 / JCM 1740 / NRRL 181 / WB 181) (Aspergillus fischerianus).